A 703-amino-acid chain; its full sequence is Ion-translocating oxidoreductase complex subunit C (703 aa).

2 consecutive 4Fe-4S ferredoxin-type domains span residues 368–397 and 407–436; these read MAPQEQEQSCIRCGLCVDACPAGLLPQQLY and KARNHNLFDCIECGACAFVCPSNIPLVQYY. [4Fe-4S] cluster contacts are provided by Cys-377, Cys-380, Cys-383, Cys-387, Cys-416, Cys-419, Cys-422, and Cys-426. 2 disordered regions span residues 505–558 and 653–674; these read AVPA…EDPR and AQQATAVETPAESPAVVTEEDP. Basic and acidic residues predominate over residues 524 to 539; sequence AAREARKAQARERRAQ.

The protein belongs to the 4Fe4S bacterial-type ferredoxin family. RnfC subfamily. As to quaternary structure, the complex is composed of six subunits: RnfA, RnfB, RnfC, RnfD, RnfE and RnfG. [4Fe-4S] cluster serves as cofactor.

The protein localises to the cell inner membrane. In terms of biological role, part of a membrane-bound complex that couples electron transfer with translocation of ions across the membrane. The polypeptide is Ion-translocating oxidoreductase complex subunit C (Serratia proteamaculans (strain 568)).